A 171-amino-acid polypeptide reads, in one-letter code: dCTP pyrophosphatase (171 aa).

The enzyme catalyses dCTP + H2O = dCMP + diphosphate + H(+). In Enterobacteria phage T4 (Bacteriophage T4), this protein is dCTP pyrophosphatase (56).